Here is an 845-residue protein sequence, read N- to C-terminus: SLIT and NTRK-like protein 2 (845 aa).

The first 21 residues, 1–21 (MLSGVWFLSVLTVAGILQTES), serve as a signal peptide directing secretion. Topologically, residues 22 to 621 (RKTAKDICKI…LHTEVPLSVL (600 aa)) are extracellular. Intrachain disulfides connect C29–C35 and C33–C46. LRR repeat units follow at residues 63-84 (RIYQ…EFVN), 87-108 (NAVT…AFSG), 111-132 (TLKR…TFLG), 135-156 (SLEY…AFSK), 159-180 (KLKV…VFRF), and 182-203 (LLTH…GVLE). N84 is a glycosylation site (N-linked (GlcNAc...) asparagine). Residues 167 to 215 (DNLLLSLPSNVFRFVLLTHLDLRGNRLKVMPFAGVLEHIGGIMEIQLEE) are required for interaction with PTPRD. Positions 216-265 (NPWNCTCDLLPLKAWLDTITVFVGEIVCETPFRLHGKDVTQLTRQDLCPR) constitute an LRRCT 1 domain. Disulfide bonds link C220–C243 and C222–C263. The segment at 263–321 (CPRKSASDSSQRGSHADTHVQRLSPTMNPALNPTRAPKASRPPKMRNRPTPRVTVSKDR) is disordered. The segment covering 283–293 (QRLSPTMNPAL) has biased composition (polar residues). The 43-residue stretch at 331-373 (QTKSPVPLTCPSSCVCTSQSSDNGLNVNCQERKFTNISDLQPK) folds into the LRRNT domain. LRR repeat units follow at residues 376-397 (SPKK…DLLE), 400-421 (SLDL…AFTN), 424-445 (SLRR…MFDG), 448-469 (SLQY…TFDA), 472-493 (NLQL…IFGG), and 495-516 (ALTR…GVLD). N421 is a glycosylation site (N-linked (GlcNAc...) asparagine). The region spanning 529–580 (NPWDCTCDIMGLKDWTEHANSPVIINEVTCESPAKHAGEILKFLGREAICPD) is the LRRCT 2 domain. The chain crosses the membrane as a helical span at residues 622–642 (ILGLLVVFILSVCFGAGLFVF). The Cytoplasmic portion of the chain corresponds to 643–845 (VLKRRKGVPS…LEKQTAISQL (203 aa)). Y756 carries the phosphotyrosine modification.

Belongs to the SLITRK family. As to quaternary structure, interacts with PTPRD; this interaction is PTPRD splicing-dependent and may induce pre-synaptic differentiation. Interacts with NTRK2. Expressed predominantly in the cerebral cortex of the brain but also at low levels in the spinal cord and medulla. Also expressed in some astrocytic brain tumors such as astrocytomas, oligodendrogliomas, glioblastomas, gangliogliomas and primitive neuroectodermal tumors.

It localises to the membrane. The protein localises to the cell membrane. It is found in the cell projection. The protein resides in the dendrite. In terms of biological role, it is involved in synaptogenesis and promotes excitatory synapse differentiation. Suppresses neurite outgrowth. Involved in the negative regulation of NTRK2. This Homo sapiens (Human) protein is SLIT and NTRK-like protein 2 (SLITRK2).